The primary structure comprises 513 residues: Maturase K (513 aa).

The protein belongs to the intron maturase 2 family. MatK subfamily.

It localises to the plastid. The protein resides in the chloroplast. Functionally, usually encoded in the trnK tRNA gene intron. Probably assists in splicing its own and other chloroplast group II introns. This is Maturase K from Molinia caerulea (Purple moor-grass).